Consider the following 205-residue polypeptide: Thiamine-phosphate synthase (205 aa).

Residues 34-38 and N66 contribute to the 4-amino-2-methyl-5-(diphosphooxymethyl)pyrimidine site; that span reads QLRCK. Mg(2+) contacts are provided by D67 and D86. S105 provides a ligand contact to 4-amino-2-methyl-5-(diphosphooxymethyl)pyrimidine. 131 to 133 lines the 2-[(2R,5Z)-2-carboxy-4-methylthiazol-5(2H)-ylidene]ethyl phosphate pocket; sequence TTT. K134 serves as a coordination point for 4-amino-2-methyl-5-(diphosphooxymethyl)pyrimidine. G163 serves as a coordination point for 2-[(2R,5Z)-2-carboxy-4-methylthiazol-5(2H)-ylidene]ethyl phosphate.

The protein belongs to the thiamine-phosphate synthase family. Mg(2+) serves as cofactor.

It catalyses the reaction 2-[(2R,5Z)-2-carboxy-4-methylthiazol-5(2H)-ylidene]ethyl phosphate + 4-amino-2-methyl-5-(diphosphooxymethyl)pyrimidine + 2 H(+) = thiamine phosphate + CO2 + diphosphate. The catalysed reaction is 2-(2-carboxy-4-methylthiazol-5-yl)ethyl phosphate + 4-amino-2-methyl-5-(diphosphooxymethyl)pyrimidine + 2 H(+) = thiamine phosphate + CO2 + diphosphate. It carries out the reaction 4-methyl-5-(2-phosphooxyethyl)-thiazole + 4-amino-2-methyl-5-(diphosphooxymethyl)pyrimidine + H(+) = thiamine phosphate + diphosphate. The protein operates within cofactor biosynthesis; thiamine diphosphate biosynthesis; thiamine phosphate from 4-amino-2-methyl-5-diphosphomethylpyrimidine and 4-methyl-5-(2-phosphoethyl)-thiazole: step 1/1. Functionally, condenses 4-methyl-5-(beta-hydroxyethyl)thiazole monophosphate (THZ-P) and 2-methyl-4-amino-5-hydroxymethyl pyrimidine pyrophosphate (HMP-PP) to form thiamine monophosphate (TMP). This is Thiamine-phosphate synthase from Neisseria meningitidis serogroup B (strain ATCC BAA-335 / MC58).